The sequence spans 111 residues: uncharacterized protein (111 aa).

One can recognise an HIT domain in the interval 4–111; sequence IFERIIEGAV…LGGGLLGSIA (108 aa). The Histidine triad motif motif lies at 96–100; the sequence is HLHIH.

This is an uncharacterized protein from Chlamydia trachomatis serovar D (strain ATCC VR-885 / DSM 19411 / UW-3/Cx).